The following is a 324-amino-acid chain: Malate dehydrogenase (324 aa).

NAD(+) is bound by residues 21–26 (GAGRVG) and Asp-45. Substrate is bound by residues Arg-94 and Arg-100. NAD(+)-binding positions include Asn-107 and 130–132 (VTN). Substrate-binding residues include Asn-132 and Arg-163. His-187 serves as the catalytic Proton acceptor.

It belongs to the LDH/MDH superfamily. MDH type 3 family.

It carries out the reaction (S)-malate + NAD(+) = oxaloacetate + NADH + H(+). Catalyzes the reversible oxidation of malate to oxaloacetate. In Trichormus variabilis (strain ATCC 29413 / PCC 7937) (Anabaena variabilis), this protein is Malate dehydrogenase.